Reading from the N-terminus, the 357-residue chain is DNA polymerase IV (357 aa).

The UmuC domain maps to 4–185; the sequence is IIHVDMDCYF…LSLRQIPGVG (182 aa). Mg(2+)-binding residues include Asp8 and Asp103. The active site involves Glu104.

It belongs to the DNA polymerase type-Y family. In terms of assembly, monomer. Requires Mg(2+) as cofactor.

It localises to the cytoplasm. The enzyme catalyses DNA(n) + a 2'-deoxyribonucleoside 5'-triphosphate = DNA(n+1) + diphosphate. Functionally, poorly processive, error-prone DNA polymerase involved in untargeted mutagenesis. Copies undamaged DNA at stalled replication forks, which arise in vivo from mismatched or misaligned primer ends. These misaligned primers can be extended by PolIV. Exhibits no 3'-5' exonuclease (proofreading) activity. May be involved in translesional synthesis, in conjunction with the beta clamp from PolIII. In Shewanella oneidensis (strain ATCC 700550 / JCM 31522 / CIP 106686 / LMG 19005 / NCIMB 14063 / MR-1), this protein is DNA polymerase IV.